The following is a 356-amino-acid chain: ADP-ribosylhydrolase ARH3 (356 aa).

Mg(2+)-binding residues include Asp26, Glu33, Thr62, Asp63, and Asp64. Position 63 (Asp63) interacts with substrate. Substrate-binding positions include 132–138 (KGSYGNG), His168, and Ile260. Asp303, Asp305, and Thr306 together coordinate Mg(2+).

The protein belongs to the ADP-ribosylglycohydrolase family. As to quaternary structure, monomer. It depends on Mg(2+) as a cofactor. Requires Mn(2+) as cofactor.

Its subcellular location is the nucleus. It is found in the cytoplasm. The protein resides in the chromosome. The protein localises to the mitochondrion matrix. It carries out the reaction [(1''-&gt;2')-ADP-alpha-D-ribose](n) + H2O = [(1''-&gt;2')-ADP-alpha-D-ribose](n-1) + ADP-D-ribose. The enzyme catalyses 1''-O-acetyl-ADP-alpha-D-ribose + H2O = ADP-D-ribose + acetate + H(+). The catalysed reaction is O-(ADP-D-ribosyl)-L-seryl-[protein] + H2O = ADP-D-ribose + L-seryl-[protein]. It catalyses the reaction alpha-NAD(+) + H2O = ADP-D-ribose + nicotinamide + H(+). Its activity is regulated as follows. The protein undergoes a dramatic conformational switch from closed to open states upon substrate-binding, which enables specific substrate recognition for the 1''-O-linkage. The glutamate flap (Glu-33) blocks substrate entrance to Mg(2+) in the unliganded closed state. In presence of substrate, Glu-33 is ejected from the active site: this closed-to-open transition significantly widens the substrate-binding channel and precisely positions the scissile 1''-O-linkage for cleavage while securing tightly 2'- and 3'-hydroxyls of ADP-ribose. Activity is inhibited by calcium. ADP-ribosylhydrolase that preferentially hydrolyzes the scissile alpha-O-linkage attached to the anomeric C1'' position of ADP-ribose and acts on different substrates, such as proteins ADP-ribosylated on serine and threonine, free poly(ADP-ribose) and O-acetyl-ADP-D-ribose. Specifically acts as a serine mono-ADP-ribosylhydrolase by mediating the removal of mono-ADP-ribose attached to serine residues on proteins, thereby playing a key role in DNA damage response. Serine ADP-ribosylation of proteins constitutes the primary form of ADP-ribosylation of proteins in response to DNA damage. Does not hydrolyze ADP-ribosyl-arginine, -cysteine, -diphthamide, or -asparagine bonds. Also able to degrade protein free poly(ADP-ribose), which is synthesized in response to DNA damage: free poly(ADP-ribose) acts as a potent cell death signal and its degradation by ADPRHL2 protects cells from poly(ADP-ribose)-dependent cell death, a process named parthanatos. Also hydrolyzes free poly(ADP-ribose) in mitochondria. Specifically digests O-acetyl-ADP-D-ribose, a product of deacetylation reactions catalyzed by sirtuins. Specifically degrades 1''-O-acetyl-ADP-D-ribose isomer, rather than 2''-O-acetyl-ADP-D-ribose or 3''-O-acetyl-ADP-D-ribose isomers. This Latimeria chalumnae (Coelacanth) protein is ADP-ribosylhydrolase ARH3 (adprs).